A 612-amino-acid polypeptide reads, in one-letter code: uncharacterized protein (612 aa).

The segment at 213 to 238 (ASAEDGEEAAAGAGKRQVARSGARKR) is disordered. A VWFA domain is found at 421 to 610 (DLACLLLADL…ERLLQLYRRL (190 aa)).

The protein resides in the cytoplasm. In terms of biological role, component of the anaerobic respiratory chain that transforms nitrate to dinitrogen (denitrification). Function unknown, but essential for the denitrification process. This is an uncharacterized protein from Pseudomonas aeruginosa (strain ATCC 15692 / DSM 22644 / CIP 104116 / JCM 14847 / LMG 12228 / 1C / PRS 101 / PAO1).